A 211-amino-acid polypeptide reads, in one-letter code: Large ribosomal subunit protein uL3 (211 aa).

Gln-151 carries the post-translational modification N5-methylglutamine.

It belongs to the universal ribosomal protein uL3 family. In terms of assembly, part of the 50S ribosomal subunit. Forms a cluster with proteins L14 and L19. In terms of processing, methylated by PrmB.

Functionally, one of the primary rRNA binding proteins, it binds directly near the 3'-end of the 23S rRNA, where it nucleates assembly of the 50S subunit. This Francisella tularensis subsp. tularensis (strain FSC 198) protein is Large ribosomal subunit protein uL3.